Here is a 309-residue protein sequence, read N- to C-terminus: Pyridoxal kinase (309 aa).

Residue T2 is modified to N-acetylthreonine; in Pyridoxal kinase, N-terminally processed. Residues S23 and T58 each contribute to the pyridoxal site. T58 contributes to the pyridoxal 5'-phosphate binding site. D124 is an ATP binding site. Residue D124 coordinates Na(+). D129 contributes to the Mg(2+) binding site. A Na(+)-binding site is contributed by T155. Residues 157-160 (NQFE), 193-194 (TS), 225-227 (IPA), and T232 contribute to the ATP site. T193 serves as a coordination point for Na(+). 233 to 234 (GD) lines the pyridoxal 5'-phosphate pocket. D234 (proton acceptor) is an active-site residue.

Belongs to the pyridoxine kinase family. As to quaternary structure, homodimer. The cofactor is Zn(2+). Expressed ubiquitously in leaves, stems, roots, flowers and siliques. Present in root hairs and other tip-growing cells such as papillar cells on the top of stigma.

The catalysed reaction is pyridoxal + ATP = pyridoxal 5'-phosphate + ADP + H(+). Its pathway is cofactor metabolism; pyridoxal 5'-phosphate salvage; pyridoxal 5'-phosphate from pyridoxal: step 1/1. Its function is as follows. Catalyzes the transfer of a phosphate group from ATP to the 5-hydroxylmethyl group of pyridoxal to form the biologically active pyridoxal phosphate, an active form of vitamin B6. Required for Na(+) and K(+) homeostasis and for salt tolerance. Involved in root hair development, both for initiation and tip growth. The chain is Pyridoxal kinase from Arabidopsis thaliana (Mouse-ear cress).